We begin with the raw amino-acid sequence, 322 residues long: MSELYDITIVGGGPVGLFAAFYAHLRQAKVKIIDSLPQLGGQPAILYPEKKILDVPGFTNLSGEELTQRLIEQLETFQTEICLNETVLDIVKSDDGFTITTSQAQHQTKTIIIAMGGGAFKPRALELDAAESYSNLHYHVSNISQYAGKKVVVLGGGDSAVDWALAFEKIAETSLVHRRDNFRALEHSVEELKASSVEIKTPFVPSRLVGENGKITHLEISQVKGEESQLLPLDHLFVNYGFKSSVGNLKDWGLELNRHKILVNSKQETSVPGIYAAGDCCSYEGKIDLIATGLGEAPTAVNNAINHIYPDQKVQPKHSTSL.

Residues aspartate 34, glutamine 42, tyrosine 47, valine 87, phenylalanine 120, aspartate 279, and threonine 320 each coordinate FAD.

It belongs to the ferredoxin--NADP reductase type 2 family. Homodimer. FAD serves as cofactor.

The enzyme catalyses 2 reduced [2Fe-2S]-[ferredoxin] + NADP(+) + H(+) = 2 oxidized [2Fe-2S]-[ferredoxin] + NADPH. The chain is Ferredoxin--NADP reductase from Streptococcus sanguinis (strain SK36).